Here is a 314-residue protein sequence, read N- to C-terminus: tRNA dimethylallyltransferase (314 aa).

12–19 serves as a coordination point for ATP; it reads GPTGTGKS. 14-19 serves as a coordination point for substrate; sequence TGTGKS.

It belongs to the IPP transferase family. As to quaternary structure, monomer. The cofactor is Mg(2+).

It carries out the reaction adenosine(37) in tRNA + dimethylallyl diphosphate = N(6)-dimethylallyladenosine(37) in tRNA + diphosphate. In terms of biological role, catalyzes the transfer of a dimethylallyl group onto the adenine at position 37 in tRNAs that read codons beginning with uridine, leading to the formation of N6-(dimethylallyl)adenosine (i(6)A). The chain is tRNA dimethylallyltransferase from Mycolicibacterium paratuberculosis (strain ATCC BAA-968 / K-10) (Mycobacterium paratuberculosis).